Reading from the N-terminus, the 121-residue chain is MQKSRNYYRKVKHVRILKKLKSNREDKQKYRIGVYKSLRNFYAYIFDPWKNKVITSVSTLDKSNGYKGNIVSASSLAPDLYKKMKKLNLENESYIFDRSGYLFHGRVKAFANALRDQGVKF.

The protein belongs to the universal ribosomal protein uL18 family. Part of the 50S ribosomal subunit; part of the 5S rRNA/L5/L18/L25 subcomplex. Contacts the 5S and 23S rRNAs.

This is one of the proteins that bind and probably mediate the attachment of the 5S RNA into the large ribosomal subunit, where it forms part of the central protuberance. This Mesomycoplasma hyopneumoniae (strain 232) (Mycoplasma hyopneumoniae) protein is Large ribosomal subunit protein uL18.